Here is a 329-residue protein sequence, read N- to C-terminus: Aurora kinase B (329 aa).

Positions 1–14 (MTLSRAKHANRNHL) are enriched in basic residues. A disordered region spans residues 1 to 21 (MTLSRAKHANRNHLPHLLAKV). A Protein kinase domain is found at 53 to 305 (FEMGAHLGRG…LVDVMTHYWV (253 aa)). ATP is bound by residues 59–67 (LGRGKFGRV) and lysine 82. Aspartate 178 (proton acceptor) is an active-site residue.

Belongs to the protein kinase superfamily. Ser/Thr protein kinase family. Aurora subfamily. In terms of assembly, interacts with Incenp and Cdc37. The cofactor is Mg(2+).

The protein localises to the chromosome. Its subcellular location is the cytoplasm. It localises to the cytoskeleton. The protein resides in the midbody. The enzyme catalyses L-seryl-[protein] + ATP = O-phospho-L-seryl-[protein] + ADP + H(+). It carries out the reaction L-threonyl-[protein] + ATP = O-phospho-L-threonyl-[protein] + ADP + H(+). Functionally, serine/threonine-protein kinase that mediates both meiotic and mitotic chromosome segregation. Required for histone H3 'Ser-10' phosphorylation. Phosphorylates mei-S332 within residues 124-126 and stabilizes its association with centromeres during meiosis. May regulate the function of the ESCRT-III complex core component shrb during abscission of germline cells in oogenesis. In Drosophila melanogaster (Fruit fly), this protein is Aurora kinase B.